The chain runs to 121 residues: ORF8 protein (121 aa).

The N-terminal stretch at 1-15 (MKFLVFLGIITTVAA) is a signal peptide. In terms of domain architecture, SARS ORF8 Ig-like spans 19-121 (ECSLQSCTQH…HDVRVVLDFI (103 aa)). 3 disulfide bridges follow: C25/C90, C37/C102, and C61/C83. N78 carries an N-linked (GlcNAc...) (complex) asparagine; by host glycan.

As to quaternary structure, homodimer. Interacts with host IL17RA. Interacts with host IL17RC. Interacts with host MHC-I. Post-translationally, glycosylated by the host when secreted via the conventional pathway. The glycosylated form cannot bind IL17A and would not participate in the cytokine storm.

It is found in the secreted. Its function is as follows. Plays a role in modulating the host immune response. May act as a secreted virokine by mimicking interleukin-17A (IL17A), and thereby binding to the IL17RA receptor, leading to activation of the IL17 pathway and increased secretion of pro-inflammatory factors. Contributes to the cytokine storm during SARS-CoV-2 infection when secreted by unconventional pathway. May act by down-regulating major histocompability complex class I (MHC-I) at cell surface. May inhibit expression of some members of the IFN-stimulated gene (ISG) family including hosts IGF2BP1/ZBP1, MX1 and MX2, and DHX58. The chain is ORF8 protein from Severe acute respiratory syndrome coronavirus 2 (2019-nCoV).